The chain runs to 245 residues: Sugar fermentation stimulation protein homolog (245 aa).

This sequence belongs to the SfsA family.

This is Sugar fermentation stimulation protein homolog from Yersinia pseudotuberculosis serotype I (strain IP32953).